Here is a 776-residue protein sequence, read N- to C-terminus: LPS-assembly protein LptD (776 aa).

An N-terminal signal peptide occupies residues 1–24; the sequence is MQHFSRTFLAASIATALFAPYAQA.

The protein belongs to the LptD family. Component of the lipopolysaccharide transport and assembly complex. Interacts with LptE and LptA.

It localises to the cell outer membrane. Its function is as follows. Together with LptE, is involved in the assembly of lipopolysaccharide (LPS) at the surface of the outer membrane. The polypeptide is LPS-assembly protein LptD (Vibrio vulnificus (strain YJ016)).